We begin with the raw amino-acid sequence, 344 residues long: Ketol-acid reductoisomerase (NADP(+)) (344 aa).

A KARI N-terminal Rossmann domain is found at 2–181 (AKVLYEKDIQ…GAARAGVLET (180 aa)). NADP(+)-binding positions include 25-28 (YGSQ), Arg-48, Ser-52, and 82-85 (DEMQ). His-107 is an active-site residue. An NADP(+)-binding site is contributed by Gly-133. One can recognise a KARI C-terminal knotted domain in the interval 182–327 (SFQEETETDL…RELRELMPFV (146 aa)). Residues Asp-190, Glu-194, Glu-226, and Glu-230 each coordinate Mg(2+). A substrate-binding site is contributed by Ser-251.

The protein belongs to the ketol-acid reductoisomerase family. Mg(2+) is required as a cofactor.

It carries out the reaction (2R)-2,3-dihydroxy-3-methylbutanoate + NADP(+) = (2S)-2-acetolactate + NADPH + H(+). The catalysed reaction is (2R,3R)-2,3-dihydroxy-3-methylpentanoate + NADP(+) = (S)-2-ethyl-2-hydroxy-3-oxobutanoate + NADPH + H(+). It functions in the pathway amino-acid biosynthesis; L-isoleucine biosynthesis; L-isoleucine from 2-oxobutanoate: step 2/4. Its pathway is amino-acid biosynthesis; L-valine biosynthesis; L-valine from pyruvate: step 2/4. Its function is as follows. Involved in the biosynthesis of branched-chain amino acids (BCAA). Catalyzes an alkyl-migration followed by a ketol-acid reduction of (S)-2-acetolactate (S2AL) to yield (R)-2,3-dihydroxy-isovalerate. In the isomerase reaction, S2AL is rearranged via a Mg-dependent methyl migration to produce 3-hydroxy-3-methyl-2-ketobutyrate (HMKB). In the reductase reaction, this 2-ketoacid undergoes a metal-dependent reduction by NADPH to yield (R)-2,3-dihydroxy-isovalerate. The sequence is that of Ketol-acid reductoisomerase (NADP(+)) from Oceanobacillus iheyensis (strain DSM 14371 / CIP 107618 / JCM 11309 / KCTC 3954 / HTE831).